Consider the following 190-residue polypeptide: 6,7-dimethyl-8-ribityllumazine synthase (190 aa).

5-amino-6-(D-ribitylamino)uracil is bound by residues Phe-23, 61–63 (SFE), and 85–87 (AVI). 90–91 (QT) serves as a coordination point for (2S)-2-hydroxy-3-oxobutyl phosphate. His-93 serves as the catalytic Proton donor. Phe-118 contacts 5-amino-6-(D-ribitylamino)uracil. Arg-132 provides a ligand contact to (2S)-2-hydroxy-3-oxobutyl phosphate.

This sequence belongs to the DMRL synthase family.

It catalyses the reaction (2S)-2-hydroxy-3-oxobutyl phosphate + 5-amino-6-(D-ribitylamino)uracil = 6,7-dimethyl-8-(1-D-ribityl)lumazine + phosphate + 2 H2O + H(+). It participates in cofactor biosynthesis; riboflavin biosynthesis; riboflavin from 2-hydroxy-3-oxobutyl phosphate and 5-amino-6-(D-ribitylamino)uracil: step 1/2. In terms of biological role, catalyzes the formation of 6,7-dimethyl-8-ribityllumazine by condensation of 5-amino-6-(D-ribitylamino)uracil with 3,4-dihydroxy-2-butanone 4-phosphate. This is the penultimate step in the biosynthesis of riboflavin. This chain is 6,7-dimethyl-8-ribityllumazine synthase, found in Nostoc sp. (strain PCC 7120 / SAG 25.82 / UTEX 2576).